Consider the following 276-residue polypeptide: Rhamnulose-1-phosphate aldolase (276 aa).

Glu-117 is a catalytic residue. Residues His-141, His-143, and His-212 each coordinate Zn(2+).

The protein belongs to the aldolase class II family. RhaD subfamily. In terms of assembly, homotetramer. Requires Zn(2+) as cofactor.

The protein resides in the cytoplasm. It catalyses the reaction L-rhamnulose 1-phosphate = (S)-lactaldehyde + dihydroxyacetone phosphate. Its pathway is carbohydrate degradation; L-rhamnose degradation; glycerone phosphate from L-rhamnose: step 3/3. Catalyzes the reversible cleavage of L-rhamnulose-1-phosphate to dihydroxyacetone phosphate (DHAP) and L-lactaldehyde. The protein is Rhamnulose-1-phosphate aldolase of Klebsiella pneumoniae (strain 342).